The primary structure comprises 68 residues: Translational regulator CsrA 1 (68 aa).

It belongs to the CsrA/RsmA family. In terms of assembly, homodimer; the beta-strands of each monomer intercalate to form a hydrophobic core, while the alpha-helices form wings that extend away from the core.

The protein resides in the cytoplasm. Its function is as follows. A key translational regulator that binds mRNA to regulate translation initiation and/or mRNA stability. Mediates global changes in gene expression, shifting from rapid growth to stress survival by linking envelope stress, the stringent response and the catabolite repression systems. Usually binds in the 5'-UTR; binding at or near the Shine-Dalgarno sequence prevents ribosome-binding, repressing translation, binding elsewhere in the 5'-UTR can activate translation and/or stabilize the mRNA. Its function is antagonized by small RNA(s). The protein is Translational regulator CsrA 1 of Coxiella burnetii (strain RSA 493 / Nine Mile phase I).